The primary structure comprises 227 residues: Cytochrome c oxidase subunit 2 (227 aa).

Residues 1–22 (MAYPFQLGLQDATSPIMEELMN) are Mitochondrial intermembrane-facing. A helical transmembrane segment spans residues 23-44 (FHDHTLMIVFLISSLVLYIISL). Residues 45–60 (MLTTKLTHTSTMDAQE) are Mitochondrial matrix-facing. The chain crosses the membrane as a helical span at residues 61–81 (VETIWTILPAVILIMIALPSL). Residues 82–227 (RILYMMDEIN…YFENWSASMI (146 aa)) lie on the Mitochondrial intermembrane side of the membrane. Cu cation contacts are provided by histidine 161, cysteine 196, glutamate 198, cysteine 200, histidine 204, and methionine 207. Glutamate 198 contacts Mg(2+). Tyrosine 218 is modified (phosphotyrosine).

Belongs to the cytochrome c oxidase subunit 2 family. Component of the cytochrome c oxidase (complex IV, CIV), a multisubunit enzyme composed of 14 subunits. The complex is composed of a catalytic core of 3 subunits MT-CO1, MT-CO2 and MT-CO3, encoded in the mitochondrial DNA, and 11 supernumerary subunits COX4I, COX5A, COX5B, COX6A, COX6B, COX6C, COX7A, COX7B, COX7C, COX8 and NDUFA4, which are encoded in the nuclear genome. The complex exists as a monomer or a dimer and forms supercomplexes (SCs) in the inner mitochondrial membrane with NADH-ubiquinone oxidoreductase (complex I, CI) and ubiquinol-cytochrome c oxidoreductase (cytochrome b-c1 complex, complex III, CIII), resulting in different assemblies (supercomplex SCI(1)III(2)IV(1) and megacomplex MCI(2)III(2)IV(2)). Found in a complex with TMEM177, COA6, COX18, COX20, SCO1 and SCO2. Interacts with TMEM177 in a COX20-dependent manner. Interacts with COX20. Interacts with COX16. The cofactor is Cu cation.

It is found in the mitochondrion inner membrane. The enzyme catalyses 4 Fe(II)-[cytochrome c] + O2 + 8 H(+)(in) = 4 Fe(III)-[cytochrome c] + 2 H2O + 4 H(+)(out). Its function is as follows. Component of the cytochrome c oxidase, the last enzyme in the mitochondrial electron transport chain which drives oxidative phosphorylation. The respiratory chain contains 3 multisubunit complexes succinate dehydrogenase (complex II, CII), ubiquinol-cytochrome c oxidoreductase (cytochrome b-c1 complex, complex III, CIII) and cytochrome c oxidase (complex IV, CIV), that cooperate to transfer electrons derived from NADH and succinate to molecular oxygen, creating an electrochemical gradient over the inner membrane that drives transmembrane transport and the ATP synthase. Cytochrome c oxidase is the component of the respiratory chain that catalyzes the reduction of oxygen to water. Electrons originating from reduced cytochrome c in the intermembrane space (IMS) are transferred via the dinuclear copper A center (CU(A)) of subunit 2 and heme A of subunit 1 to the active site in subunit 1, a binuclear center (BNC) formed by heme A3 and copper B (CU(B)). The BNC reduces molecular oxygen to 2 water molecules using 4 electrons from cytochrome c in the IMS and 4 protons from the mitochondrial matrix. This Mus musculus (Mouse) protein is Cytochrome c oxidase subunit 2 (Mtco2).